An 89-amino-acid chain; its full sequence is Small ribosomal subunit protein uS15 (89 aa).

It belongs to the universal ribosomal protein uS15 family. Part of the 30S ribosomal subunit. Forms a bridge to the 50S subunit in the 70S ribosome, contacting the 23S rRNA.

Its function is as follows. One of the primary rRNA binding proteins, it binds directly to 16S rRNA where it helps nucleate assembly of the platform of the 30S subunit by binding and bridging several RNA helices of the 16S rRNA. Forms an intersubunit bridge (bridge B4) with the 23S rRNA of the 50S subunit in the ribosome. This chain is Small ribosomal subunit protein uS15, found in Acaryochloris marina (strain MBIC 11017).